A 427-amino-acid chain; its full sequence is Stemphyloxin II biosynthesis cluster transcription factor sthR (427 aa).

The zn(2)-C6 fungal-type DNA-binding region spans 15 to 45 (CDRCRKQKLRCPPDKDDMGTCGRCLRAGVAC). The segment at 51-70 (KPRGRSQKHGISTDGTSHVS) is disordered. Over residues 59-69 (HGISTDGTSHV) the composition is skewed to polar residues.

The protein localises to the nucleus. Transcription factor that regulates the expression of the gene cluster that mediates the biosynthesis of the phytotoxin stemphyloxin II. This is Stemphyloxin II biosynthesis cluster transcription factor sthR from Phaeosphaeria nodorum (strain SN15 / ATCC MYA-4574 / FGSC 10173) (Glume blotch fungus).